The sequence spans 200 residues: Superoxide dismutase [Fe] (200 aa).

4 residues coordinate Fe cation: H28, H82, D165, and H169.

It belongs to the iron/manganese superoxide dismutase family. Homodimer. Fe cation is required as a cofactor.

The catalysed reaction is 2 superoxide + 2 H(+) = H2O2 + O2. Functionally, destroys superoxide anion radicals which are normally produced within the cells and which are toxic to biological systems. The sequence is that of Superoxide dismutase [Fe] (sodB) from Rhodobacter capsulatus (Rhodopseudomonas capsulata).